The chain runs to 529 residues: Bifunctional purine biosynthesis protein PurH (529 aa).

The MGS-like domain maps to 1–148; the sequence is MQQRRPVRRA…KNHKDVAIVV (148 aa). Residue K287 is modified to N6-acetyllysine.

This sequence belongs to the PurH family.

It catalyses the reaction (6R)-10-formyltetrahydrofolate + 5-amino-1-(5-phospho-beta-D-ribosyl)imidazole-4-carboxamide = 5-formamido-1-(5-phospho-D-ribosyl)imidazole-4-carboxamide + (6S)-5,6,7,8-tetrahydrofolate. The enzyme catalyses IMP + H2O = 5-formamido-1-(5-phospho-D-ribosyl)imidazole-4-carboxamide. Its pathway is purine metabolism; IMP biosynthesis via de novo pathway; 5-formamido-1-(5-phospho-D-ribosyl)imidazole-4-carboxamide from 5-amino-1-(5-phospho-D-ribosyl)imidazole-4-carboxamide (10-formyl THF route): step 1/1. It participates in purine metabolism; IMP biosynthesis via de novo pathway; IMP from 5-formamido-1-(5-phospho-D-ribosyl)imidazole-4-carboxamide: step 1/1. The chain is Bifunctional purine biosynthesis protein PurH from Escherichia coli O45:K1 (strain S88 / ExPEC).